Consider the following 378-residue polypeptide: Phospho-N-acetylmuramoyl-pentapeptide-transferase (378 aa).

Helical transmembrane passes span 26–46 (LFRL…TGAN), 57–77 (LPWL…VPLL), 103–123 (MGGI…TGFA), 127–147 (LSPT…IGWW), 171–191 (GIGA…ATVV), 195–215 (WGWV…VPMA), 225–245 (GLDG…GIIL), 247–267 (PYPD…GFLW), 275–295 (VFMG…IGLA), 302–322 (LLIV…QVLY), and 356–376 (IVRT…LLQW).

It belongs to the glycosyltransferase 4 family. MraY subfamily. The cofactor is Mg(2+).

The protein resides in the cell inner membrane. It carries out the reaction UDP-N-acetyl-alpha-D-muramoyl-L-alanyl-gamma-D-glutamyl-meso-2,6-diaminopimeloyl-D-alanyl-D-alanine + di-trans,octa-cis-undecaprenyl phosphate = di-trans,octa-cis-undecaprenyl diphospho-N-acetyl-alpha-D-muramoyl-L-alanyl-D-glutamyl-meso-2,6-diaminopimeloyl-D-alanyl-D-alanine + UMP. It functions in the pathway cell wall biogenesis; peptidoglycan biosynthesis. Its function is as follows. Catalyzes the initial step of the lipid cycle reactions in the biosynthesis of the cell wall peptidoglycan: transfers peptidoglycan precursor phospho-MurNAc-pentapeptide from UDP-MurNAc-pentapeptide onto the lipid carrier undecaprenyl phosphate, yielding undecaprenyl-pyrophosphoryl-MurNAc-pentapeptide, known as lipid I. In Thermosynechococcus vestitus (strain NIES-2133 / IAM M-273 / BP-1), this protein is Phospho-N-acetylmuramoyl-pentapeptide-transferase.